A 172-amino-acid chain; its full sequence is Adenine phosphoribosyltransferase (172 aa).

It belongs to the purine/pyrimidine phosphoribosyltransferase family. As to quaternary structure, homodimer.

It localises to the cytoplasm. The catalysed reaction is AMP + diphosphate = 5-phospho-alpha-D-ribose 1-diphosphate + adenine. It participates in purine metabolism; AMP biosynthesis via salvage pathway; AMP from adenine: step 1/1. Functionally, catalyzes a salvage reaction resulting in the formation of AMP, that is energically less costly than de novo synthesis. The chain is Adenine phosphoribosyltransferase from Clostridium botulinum (strain Alaska E43 / Type E3).